Reading from the N-terminus, the 426-residue chain is Putative acid phosphatase 1 (426 aa).

The signal sequence occupies residues 1 to 18 (MRVLFYVSILVIIASVHT). Topologically, residues 19 to 388 (QLISVHVIFR…SEWVMTPLSW (370 aa)) are extracellular. The Nucleophile role is filled by His-29. Asn-37 and Asn-145 each carry an N-linked (GlcNAc...) asparagine glycan. Cysteines 133 and 369 form a disulfide. Asp-276 acts as the Proton donor in catalysis. A helical transmembrane segment spans residues 389–409 (IIVAIAILLLIALILMTYFVI). The Cytoplasmic segment spans residues 410 to 426 (RYKNRSIVNIKKLSLEN).

This sequence belongs to the histidine acid phosphatase family.

The protein resides in the membrane. It catalyses the reaction a phosphate monoester + H2O = an alcohol + phosphate. The sequence is that of Putative acid phosphatase 1 from Caenorhabditis elegans.